A 478-amino-acid polypeptide reads, in one-letter code: Membrane-bound lytic murein transglycosylase F (478 aa).

An N-terminal signal peptide occupies residues 1-22 (MTRFLFAIILGFLLTACQQVTV). The segment at 23–257 (EETEYVPHKL…HLNEKYFGHV (235 aa)) is non-LT domain. The tract at residues 258-478 (KRFDYIDTRA…PGTLSPDKPK (221 aa)) is LT domain. Residue glutamate 302 is part of the active site. Residues 446–478 (SKQQNSDEEEPSDLASEDGPAPVPGTLSPDKPK) form a disordered region. Residues 451-461 (SDEEEPSDLAS) are compositionally biased toward acidic residues.

The protein in the N-terminal section; belongs to the bacterial solute-binding protein 3 family. This sequence in the C-terminal section; belongs to the transglycosylase Slt family.

It is found in the cell outer membrane. It carries out the reaction Exolytic cleavage of the (1-&gt;4)-beta-glycosidic linkage between N-acetylmuramic acid (MurNAc) and N-acetylglucosamine (GlcNAc) residues in peptidoglycan, from either the reducing or the non-reducing ends of the peptidoglycan chains, with concomitant formation of a 1,6-anhydrobond in the MurNAc residue.. In terms of biological role, murein-degrading enzyme that degrades murein glycan strands and insoluble, high-molecular weight murein sacculi, with the concomitant formation of a 1,6-anhydromuramoyl product. Lytic transglycosylases (LTs) play an integral role in the metabolism of the peptidoglycan (PG) sacculus. Their lytic action creates space within the PG sacculus to allow for its expansion as well as for the insertion of various structures such as secretion systems and flagella. This is Membrane-bound lytic murein transglycosylase F from Shewanella sp. (strain ANA-3).